The sequence spans 444 residues: Phosphoglucosamine mutase (444 aa).

Catalysis depends on serine 101, which acts as the Phosphoserine intermediate. The Mg(2+) site is built by serine 101, aspartate 240, aspartate 242, and aspartate 244. Position 101 is a phosphoserine (serine 101).

This sequence belongs to the phosphohexose mutase family. It depends on Mg(2+) as a cofactor. In terms of processing, activated by phosphorylation.

The catalysed reaction is alpha-D-glucosamine 1-phosphate = D-glucosamine 6-phosphate. Catalyzes the conversion of glucosamine-6-phosphate to glucosamine-1-phosphate. The polypeptide is Phosphoglucosamine mutase (Aeromonas salmonicida (strain A449)).